The sequence spans 477 residues: Glycogen synthase (477 aa).

Lys-15 contacts ADP-alpha-D-glucose.

This sequence belongs to the glycosyltransferase 1 family. Bacterial/plant glycogen synthase subfamily.

It catalyses the reaction [(1-&gt;4)-alpha-D-glucosyl](n) + ADP-alpha-D-glucose = [(1-&gt;4)-alpha-D-glucosyl](n+1) + ADP + H(+). The protein operates within glycan biosynthesis; glycogen biosynthesis. In terms of biological role, synthesizes alpha-1,4-glucan chains using ADP-glucose. This chain is Glycogen synthase, found in Escherichia coli O139:H28 (strain E24377A / ETEC).